A 615-amino-acid chain; its full sequence is Coagulation factor XII (615 aa).

The signal sequence occupies residues 1–19 (MRALLLLGFLLVSLESTLS). The Fibronectin type-II domain maps to 42-90 (VTGEPCHFPFQYHRQLYHKCTHKGRPGPQPWCATTPNFDQDQRWGYCLE). 13 disulfide bridges follow: Cys-47–Cys-73, Cys-61–Cys-88, Cys-98–Cys-110, Cys-104–Cys-119, Cys-121–Cys-130, Cys-135–Cys-163, Cys-161–Cys-170, Cys-178–Cys-189, Cys-183–Cys-198, Cys-200–Cys-209, Cys-217–Cys-295, Cys-238–Cys-277, and Cys-266–Cys-290. Residues 94-131 (VKDHCSKHSPCQKGGTCVNMPSGPHCLCPQHLTGNHCQ) enclose the EGF-like 1 domain. An O-linked (Fuc) threonine glycan is attached at Thr-109. One can recognise a Fibronectin type-I domain in the interval 133 to 173 (EKCFEPQLLRFFHKNEIWYRTEQAAVARCQCKGPDAHCQRL). Positions 174 to 210 (ASQACRTNPCLHGGRCLEVEGHRLCHCPVGYTGAFCD) constitute an EGF-like 2 domain. The region spanning 217 to 295 (CYDGRGLSYR…SWEYCDLAQC (79 aa)) is the Kringle domain. Residue Asn-249 is glycosylated (N-linked (GlcNAc...) asparagine). Positions 298 to 359 (PTQAAPPTPV…SLTRNGPLSC (62 aa)) are disordered. 2 O-linked (GalNAc...) threonine glycosylation sites follow: Thr-299 and Thr-305. Residue Ser-308 is glycosylated (O-linked (GalNAc...) serine). The segment covering 317–326 (PAQPAPPKPQ) has biased composition (pro residues). Positions 327-338 (PTTRTPPQSQTP) are enriched in low complexity. O-linked (GalNAc...) threonine glycosylation is found at Thr-328, Thr-329, and Thr-337. Cystine bridges form between Cys-359–Cys-486, Cys-397–Cys-413, Cys-405–Cys-475, Cys-436–Cys-439, Cys-500–Cys-569, Cys-532–Cys-548, and Cys-559–Cys-590. The region spanning 373–614 (VVGGLVALRG…YLAWIREHTV (242 aa)) is the Peptidase S1 domain. The active-site Charge relay system is the His-412. Residue Asn-433 is glycosylated (N-linked (GlcNAc...) asparagine). The Charge relay system role is filled by Asp-461. Ser-563 serves as the catalytic Charge relay system.

This sequence belongs to the peptidase S1 family. Interacts with HRG; the interaction, which is enhanced in the presence of zinc ions and inhibited by heparin-binding, inhibits factor XII autoactivation and contact-initiated coagulation. Interacts (inactive and activated) with D7L2, an anticoagulant protein from Anopheles gambiae. Interacts (activated) with iripin-8, a serine protease inhibitor from Ixodes ricinus saliva. Interacts (inactive and activated) (via amino acids 1-77) with triafestin-1 and triafestin-2, anticoagulant proteins from Triatoma infestans. Interacts (inactive and activated) (via amino acids 1-77) with short form salivary protein D7R1, an anticoagulant protein from Anopheles stephensi. Interacts (inactive and activated) (via fibronectin type II domain) with haemaphysalin, an anticoagulant protein from Haemaphysalis longicornis. Factor XII is activated by kallikrein in alpha-factor XIIa, which is further converted by trypsin into beta-factor XIIa. Alpha-factor XIIa is composed of an NH2-terminal heavy chain, called coagulation factor XIIa heavy chain, and a COOH-terminal light chain, called coagulation factor XIIa light chain, connected by a disulfide bond. Beta-factor XIIa is composed of 2 chains linked by a disulfide bond, an N-terminal nonapeptide, called beta-factor XIIa part 1, and coagulation factor XIIa light chain, also known in this context as beta-factor XIIa part 2. Post-translationally, O- and N-glycosylated. The O-linked polysaccharides were not identified, but are probably the mucin type linked to GalNAc.

It localises to the secreted. The catalysed reaction is Selective cleavage of Arg-|-Ile bonds in factor VII to form factor VIIa and factor XI to form factor XIa.. With respect to regulation, activity is promoted in the presence of negatively charged surfaces. Functionally, factor XII is a serum glycoprotein that participates in the initiation of blood coagulation, fibrinolysis, and the generation of bradykinin and angiotensin. Prekallikrein is cleaved by factor XII to form kallikrein, which then cleaves factor XII first to alpha-factor XIIa and then trypsin cleaves it to beta-factor XIIa. Alpha-factor XIIa activates factor XI to factor XIa. In Homo sapiens (Human), this protein is Coagulation factor XII (F12).